A 354-amino-acid polypeptide reads, in one-letter code: Biotin synthase (354 aa).

Positions 64–282 (GDVELATLLS…IAVARITMPR (219 aa)) constitute a Radical SAM core domain. 3 residues coordinate [4Fe-4S] cluster: Cys-79, Cys-83, and Cys-86. Residues Cys-123, Cys-154, Cys-214, and Arg-286 each contribute to the [2Fe-2S] cluster site.

This sequence belongs to the radical SAM superfamily. Biotin synthase family. Homodimer. Requires [4Fe-4S] cluster as cofactor. [2Fe-2S] cluster is required as a cofactor.

The catalysed reaction is (4R,5S)-dethiobiotin + (sulfur carrier)-SH + 2 reduced [2Fe-2S]-[ferredoxin] + 2 S-adenosyl-L-methionine = (sulfur carrier)-H + biotin + 2 5'-deoxyadenosine + 2 L-methionine + 2 oxidized [2Fe-2S]-[ferredoxin]. It participates in cofactor biosynthesis; biotin biosynthesis; biotin from 7,8-diaminononanoate: step 2/2. In terms of biological role, catalyzes the conversion of dethiobiotin (DTB) to biotin by the insertion of a sulfur atom into dethiobiotin via a radical-based mechanism. The chain is Biotin synthase from Paracidovorax citrulli (strain AAC00-1) (Acidovorax citrulli).